A 455-amino-acid polypeptide reads, in one-letter code: Argininosuccinate lyase (455 aa).

This sequence belongs to the lyase 1 family. Argininosuccinate lyase subfamily.

The protein resides in the cytoplasm. It catalyses the reaction 2-(N(omega)-L-arginino)succinate = fumarate + L-arginine. It functions in the pathway amino-acid biosynthesis; L-arginine biosynthesis; L-arginine from L-ornithine and carbamoyl phosphate: step 3/3. In Roseiflexus sp. (strain RS-1), this protein is Argininosuccinate lyase.